The sequence spans 139 residues: GATA transcription factor 16 (139 aa).

The segment at 32 to 86 adopts a GATA-type zinc-finger fold; the sequence is NDKKKTCADCGTSKTPLWRGGPVGPKSLCNACGIRNRKKRRGGTEDNKKLKKSSS. The disordered stretch occupies residues 67–98; the sequence is NRKKRRGGTEDNKKLKKSSSGGGNRKFGESLK.

Belongs to the type IV zinc-finger family. Class B subfamily.

It is found in the nucleus. Functionally, transcriptional regulator that specifically binds 5'-GATA-3' or 5'-GAT-3' motifs within gene promoters. This Arabidopsis thaliana (Mouse-ear cress) protein is GATA transcription factor 16 (GATA16).